The following is a 229-amino-acid chain: Peptidase E (229 aa).

Catalysis depends on charge relay system residues serine 120, aspartate 135, and histidine 157.

It belongs to the peptidase S51 family.

Its subcellular location is the cytoplasm. The catalysed reaction is Dipeptidase E catalyzes the hydrolysis of dipeptides Asp-|-Xaa. It does not act on peptides with N-terminal Glu, Asn or Gln, nor does it cleave isoaspartyl peptides.. Functionally, hydrolyzes dipeptides containing N-terminal aspartate residues. May play a role in allowing the cell to use peptide aspartate to spare carbon otherwise required for the synthesis of the aspartate family of amino acids. The polypeptide is Peptidase E (Salmonella newport (strain SL254)).